Reading from the N-terminus, the 313-residue chain is Ribosomal RNA small subunit methyltransferase H (313 aa).

Residues 35-37 (GGH), D55, F80, D102, and Q109 contribute to the S-adenosyl-L-methionine site.

Belongs to the methyltransferase superfamily. RsmH family.

It is found in the cytoplasm. It catalyses the reaction cytidine(1402) in 16S rRNA + S-adenosyl-L-methionine = N(4)-methylcytidine(1402) in 16S rRNA + S-adenosyl-L-homocysteine + H(+). In terms of biological role, specifically methylates the N4 position of cytidine in position 1402 (C1402) of 16S rRNA. This Shewanella sp. (strain MR-7) protein is Ribosomal RNA small subunit methyltransferase H.